The primary structure comprises 108 residues: Nucleoid-associated protein Lcho_1975 (108 aa).

Belongs to the YbaB/EbfC family. In terms of assembly, homodimer.

It is found in the cytoplasm. It localises to the nucleoid. Its function is as follows. Binds to DNA and alters its conformation. May be involved in regulation of gene expression, nucleoid organization and DNA protection. In Leptothrix cholodnii (strain ATCC 51168 / LMG 8142 / SP-6) (Leptothrix discophora (strain SP-6)), this protein is Nucleoid-associated protein Lcho_1975.